A 509-amino-acid chain; its full sequence is tRNA (guanine(37)-N(1))-methyltransferase (509 aa).

S-adenosyl-L-methionine contacts are provided by residues H289, 327–328, 355–356, and N387; these read DL and DG. Positions 478-509 are disordered; that stretch reads TRNPENHEDPPLKRQRTAEAFSDEKTQIVSNT.

Belongs to the class I-like SAM-binding methyltransferase superfamily. TRM5/TYW2 family. As to quaternary structure, monomer.

It is found in the mitochondrion matrix. The protein localises to the nucleus. Its subcellular location is the cytoplasm. It catalyses the reaction guanosine(37) in tRNA + S-adenosyl-L-methionine = N(1)-methylguanosine(37) in tRNA + S-adenosyl-L-homocysteine + H(+). In terms of biological role, involved in mitochondrial tRNA methylation. Specifically methylates the N1 position of guanosine-37 in various tRNAs. Methylation is not dependent on the nature of the nucleoside 5' of the target nucleoside. This is the first step in the biosynthesis of wybutosine (yW), a modified base adjacent to the anticodon of tRNAs and required for accurate decoding. This chain is tRNA (guanine(37)-N(1))-methyltransferase, found in Homo sapiens (Human).